The following is a 966-amino-acid chain: Replication protein 1a (966 aa).

The interval 49–381 (RNKLSVAECD…VIINGQSIMS (333 aa)) is methyltransferase. Residues 71–261 (NLTHEYTAPH…HDWKNLGSFL (191 aa)) enclose the Alphavirus-like MT domain. The (+)RNA virus helicase ATP-binding domain occupies 660–815 (DKTCSCANAK…NIEYDKRDIV (156 aa)). Positions 687 to 951 (MVDGVAGCGK…TRHKRTFEYL (265 aa)) are ATP-dependent helicase. 690–697 (GVAGCGKT) serves as a coordination point for ATP. In terms of domain architecture, (+)RNA virus helicase C-terminal spans 816 to 966 (SKTFRCPQDV…GGDLISFYVT (151 aa)).

Belongs to the bromoviridae replication protein 1a family.

Its subcellular location is the host endoplasmic reticulum membrane. Functionally, involved in the virus replication. Contains a helicase domain and a methyltransferase domain. The methyltransferase domain is probably involved in viral RNA capping. The protein is Replication protein 1a of Vicia faba (Broad bean).